The primary structure comprises 222 residues: MGLVVKDISKTFGEKSSKTEVLKDINFEVKDGEFIILNGASGSGKTTLLTILGGLLSQTSGDVVYEGKSLFERHTNKAHLRLNDIGFIFQASHLVPYLKVLDQLTLIGKEAGMSSKEAQARAKELLTKIGLEEQLNSYPHMLSGGQQQRVAIMRALMNHPKIVLADEPTASLDASRAQEVVEMIRKQIKANQMIGIMITHDESLFKYADRIVQLYDGKIKNS.

An ABC transporter domain is found at 3-222 (LVVKDISKTF…QLYDGKIKNS (220 aa)). 39–46 (GASGSGKT) contacts ATP.

Belongs to the ABC transporter superfamily. HrtA family. In terms of assembly, the complex is composed of two ATP-binding proteins (HrtA), two transmembrane proteins (HrtB) and a solute-binding protein.

Its subcellular location is the cell membrane. Functionally, part of the ABC transporter complex hrt involved in hemin import. Responsible for energy coupling to the transport system. The protein is Putative hemin import ATP-binding protein HrtA (hrtA) of Staphylococcus epidermidis (strain ATCC 12228 / FDA PCI 1200).